The following is an 890-amino-acid chain: DNA mismatch repair protein MutS (890 aa).

607 to 614 contacts ATP; that stretch reads GPNMSGKS.

It belongs to the DNA mismatch repair MutS family.

Functionally, this protein is involved in the repair of mismatches in DNA. It is possible that it carries out the mismatch recognition step. This protein has a weak ATPase activity. This Bacillus thuringiensis subsp. konkukian (strain 97-27) protein is DNA mismatch repair protein MutS.